The sequence spans 384 residues: Fructose-1,6-bisphosphate aldolase/phosphatase (384 aa).

Catalysis depends on Asp11, which acts as the Proton acceptor; for FBP phosphatase activity. Mg(2+) contacts are provided by Asp11, His18, Asp52, and Asp53. His18 is a binding site for beta-D-fructose 1,6-bisphosphate. His18 serves as a coordination point for dihydroxyacetone phosphate. Beta-D-fructose 1,6-bisphosphate is bound at residue Tyr90. A Mg(2+)-binding site is contributed by Gln94. 103–104 is a beta-D-fructose 1,6-bisphosphate binding site; the sequence is GN. Asp131 lines the Mg(2+) pocket. Lys132 is a binding site for beta-D-fructose 1,6-bisphosphate. Lys132 lines the dihydroxyacetone phosphate pocket. Residue Tyr228 is the Proton donor/acceptor; for FBP aldolase activity of the active site. Residues Lys231, Asp232, and Asp233 each coordinate Mg(2+). The active-site Schiff-base intermediate with DHAP; for FBP aldolase activity is the Lys231. Residues 241–242, Arg265, Asp286, and Tyr347 each bind beta-D-fructose 1,6-bisphosphate; that span reads QH. Dihydroxyacetone phosphate contacts are provided by Arg265 and Asp286.

This sequence belongs to the FBP aldolase/phosphatase family. In terms of assembly, homooctamer; dimer of tetramers. Mg(2+) is required as a cofactor.

The catalysed reaction is beta-D-fructose 1,6-bisphosphate + H2O = beta-D-fructose 6-phosphate + phosphate. It catalyses the reaction beta-D-fructose 1,6-bisphosphate = D-glyceraldehyde 3-phosphate + dihydroxyacetone phosphate. The protein operates within carbohydrate biosynthesis; gluconeogenesis. Catalyzes two subsequent steps in gluconeogenesis: the aldol condensation of dihydroxyacetone phosphate (DHAP) and glyceraldehyde-3-phosphate (GA3P) to fructose-1,6-bisphosphate (FBP), and the dephosphorylation of FBP to fructose-6-phosphate (F6P). The sequence is that of Fructose-1,6-bisphosphate aldolase/phosphatase from Sulfurisphaera tokodaii (strain DSM 16993 / JCM 10545 / NBRC 100140 / 7) (Sulfolobus tokodaii).